Here is a 119-residue protein sequence, read N- to C-terminus: Neuropeptide B (119 aa).

A signal peptide spans 1 to 21 (MVRCRTLVAAALALLLTPALA). The propeptide occupies 53-119 (SESPALRVGT…SLHKAECQSA (67 aa)).

The protein belongs to the neuropeptide B/W family. In terms of tissue distribution, detected in a variety of tissues. High levels are found in the lymphoid organs, central nervous system, mammary gland and uterus.

The protein localises to the secreted. In terms of biological role, may be involved in the regulation of feeding, neuroendocrine system, memory and learning. May be involved in the afferent pain pathway. This Rattus norvegicus (Rat) protein is Neuropeptide B (Npb).